A 628-amino-acid chain; its full sequence is Chaperone protein HtpG (628 aa).

An a; substrate-binding region spans residues 1–339 (MSNNQQTLGF…SNDLPLNVSR (339 aa)). The b stretch occupies residues 340-556 (EILQDNKTTA…NDQMTTQMAK (217 aa)). A c region spans residues 557–628 (LFAMSGQPVP…IKRVNTLLAG (72 aa)).

Belongs to the heat shock protein 90 family. In terms of assembly, homodimer.

Its subcellular location is the cytoplasm. In terms of biological role, molecular chaperone. Has ATPase activity. The chain is Chaperone protein HtpG from Actinobacillus succinogenes (strain ATCC 55618 / DSM 22257 / CCUG 43843 / 130Z).